The chain runs to 291 residues: Putative butyrophilin-like protein 10 pseudogene (291 aa).

A signal peptide spans 1–26 (MAVTCDPEAFLSICFVTLVFLQLPLA). An Ig-like V-type domain is found at 27–146 (SIWKADFDVT…GEATVQVQVA (120 aa)). The Extracellular portion of the chain corresponds to 27-254 (SIWKADFDVT…RSSQFTAWKA (228 aa)). A disulfide bond links C54 and C128. Residue N59 is glycosylated (N-linked (GlcNAc...) asparagine). Residues 255–275 (ALPLILVAMGLVIAGGICIFW) form a helical membrane-spanning segment. The Cytoplasmic portion of the chain corresponds to 276 to 291 (KRQREKNKASLEEERE).

This sequence belongs to the immunoglobulin superfamily. BTN/MOG family.

The protein localises to the membrane. The sequence is that of Putative butyrophilin-like protein 10 pseudogene from Homo sapiens (Human).